The primary structure comprises 574 residues: Adenine deaminase (574 aa).

It belongs to the metallo-dependent hydrolases superfamily. Adenine deaminase family. Mn(2+) is required as a cofactor.

It carries out the reaction adenine + H2O + H(+) = hypoxanthine + NH4(+). This Thermosipho melanesiensis (strain DSM 12029 / CIP 104789 / BI429) protein is Adenine deaminase.